The primary structure comprises 602 residues: Cholinesterase (602 aa).

Residues Met1 to Thr28 form the signal peptide. Residues Asn85 and Asn134 are each glycosylated (N-linked (GlcNAc...) asparagine). Gly144–Ser145 is a substrate binding site. The active-site Acyl-ester intermediate is Ser226. The residue at position 226 (Ser226) is a Phosphoserine. Residues Asn269 and Asn284 are each glycosylated (N-linked (GlcNAc...) asparagine). Glu353 functions as the Charge relay system in the catalytic mechanism. Asn369 carries N-linked (GlcNAc...) asparagine glycosylation. Residue His466 is the Charge relay system of the active site. 4 N-linked (GlcNAc...) asparagine glycosylation sites follow: Asn483, Asn509, Asn513, and Asn514.

Belongs to the type-B carboxylesterase/lipase family. Homotetramer; disulfide-linked. Dimer of dimers. Present in most cells except erythrocytes.

It is found in the secreted. It catalyses the reaction an acylcholine + H2O = a carboxylate + choline + H(+). Functionally, esterase with broad substrate specificity. Contributes to the inactivation of the neurotransmitter acetylcholine. Can degrade neurotoxic organophosphate esters. The protein is Cholinesterase (BCHE) of Bos taurus (Bovine).